Reading from the N-terminus, the 368-residue chain is MTVKLTIDCMGGDHGPSVTVPAAVKFVRAHPDAHLMLVGIESAIRAQLKKLKALDDPALTIVPATEVVAMDDPVEVALRKKKDSSMRVALNHVKEGAAQACISAGNTGALMAVSRYVLKTLPGIERPAIAFALPNPTGYTMMLDLGANVDCEPQHLLQFAEMGHALVAALEGKERPTIGLLNIGEEVIKGNETIKRAGELLRASTLNFRGNVEGNDIYKGTVDVIVCDGFVGNVALKTSEGLAQMLSDIIREEFGRSLMSKLMALLALPVLMRFKKRVDHRQYNGAALLGLKSLVIKSHGSADAYAFEWAIKRGYDAVKNGVLERLARAMADNSVSLGDGEHDAGGAGQASPAAGHHAEPSAAQSSKA.

The disordered stretch occupies residues 337–368 (LGDGEHDAGGAGQASPAAGHHAEPSAAQSSKA).

This sequence belongs to the PlsX family. As to quaternary structure, homodimer. Probably interacts with PlsY.

Its subcellular location is the cytoplasm. The enzyme catalyses a fatty acyl-[ACP] + phosphate = an acyl phosphate + holo-[ACP]. It participates in lipid metabolism; phospholipid metabolism. In terms of biological role, catalyzes the reversible formation of acyl-phosphate (acyl-PO(4)) from acyl-[acyl-carrier-protein] (acyl-ACP). This enzyme utilizes acyl-ACP as fatty acyl donor, but not acyl-CoA. The protein is Phosphate acyltransferase of Burkholderia orbicola (strain MC0-3).